Here is a 408-residue protein sequence, read N- to C-terminus: Exodeoxyribonuclease 7 large subunit (408 aa).

The protein belongs to the XseA family. As to quaternary structure, heterooligomer composed of large and small subunits.

The protein localises to the cytoplasm. The catalysed reaction is Exonucleolytic cleavage in either 5'- to 3'- or 3'- to 5'-direction to yield nucleoside 5'-phosphates.. Its function is as follows. Bidirectionally degrades single-stranded DNA into large acid-insoluble oligonucleotides, which are then degraded further into small acid-soluble oligonucleotides. This Alkaliphilus oremlandii (strain OhILAs) (Clostridium oremlandii (strain OhILAs)) protein is Exodeoxyribonuclease 7 large subunit.